The primary structure comprises 241 residues: MLSESLTKTKLTDPLILDLLQNIREHRSMLEDLVSIKIDPNLTNIISNEIGRELYIENEFHKAKGFRKLHIEVAEFSKNLRILHCVFFPDPKFDIPIFGMDLVKINDIVSAAIVDLSPASQNQGLKYEKLLSQVDKSSFSSLREIPKWGGIFSNNVFFASLKRNSEKNDFCRVVDQYLSILIKLSNKAKAEVDKEIIQERIDFQKNYCVQQMKNEKTSMVLLKYFDEKWVNNYIKTVLFDF.

This sequence belongs to the HY2 family.

It catalyses the reaction (2R,3Z)-phycocyanobilin + 4 oxidized [2Fe-2S]-[ferredoxin] = biliverdin IXalpha + 4 reduced [2Fe-2S]-[ferredoxin] + 4 H(+). In terms of biological role, catalyzes the four-electron reduction of biliverdin IX-alpha (2-electron reduction at both the A and D rings); the reaction proceeds via an isolatable 2-electron intermediate, 181,182-dihydrobiliverdin. This chain is Phycocyanobilin:ferredoxin oxidoreductase, found in Prochlorococcus marinus (strain MIT 9215).